Here is a 609-residue protein sequence, read N- to C-terminus: NURS complex subunit pir2 (609 aa).

Basic and acidic residues predominate over residues 1 to 25 (MSEVHQESEVEYSRWKRERSPERSQ). Disordered regions lie at residues 1–60 (MSEV…RASG) and 187–210 (EKPSIPDNDTDDSILPSNDPQLSK). Positions 27 to 36 (RSQSPPGEQS) are enriched in low complexity. Phosphoserine is present on residues S28 and S30. A compositionally biased stretch (basic and acidic residues) spans 37-57 (AYHRERSPLRKRGNYYDDRTR). Over residues 201–210 (LPSNDPQLSK) the composition is skewed to polar residues. The C2H2-type zinc-finger motif lies at 474–499 (YRCHVGTCAKLFLGPEFVRKHINKKH).

The protein belongs to the ARS2 family. As to quaternary structure, interacts with ccr4.

The protein resides in the nucleus. This is NURS complex subunit pir2 from Schizosaccharomyces pombe (strain 972 / ATCC 24843) (Fission yeast).